A 129-amino-acid chain; its full sequence is MIKPNFRHIINGKRLATAIAQDYKTGEILMVAFIDEEAFNKTIQTRKAHYYSTSRNMIWYKGEESGHIQEIKEVLLDCDEDAIIFKVKQVGGACHTGHYSCFYKKLSDDGEVVTEYEDKVFDPEDVYEK.

A Mg(2+)-binding site is contributed by Asp-77. Residue Cys-78 coordinates Zn(2+). Mg(2+)-binding residues include Asp-79 and Asp-81. Zn(2+) contacts are provided by Cys-94 and Cys-101.

This sequence belongs to the PRA-CH family. Homodimer. Requires Mg(2+) as cofactor. Zn(2+) serves as cofactor.

It is found in the cytoplasm. The catalysed reaction is 1-(5-phospho-beta-D-ribosyl)-5'-AMP + H2O = 1-(5-phospho-beta-D-ribosyl)-5-[(5-phospho-beta-D-ribosylamino)methylideneamino]imidazole-4-carboxamide. The protein operates within amino-acid biosynthesis; L-histidine biosynthesis; L-histidine from 5-phospho-alpha-D-ribose 1-diphosphate: step 3/9. Functionally, catalyzes the hydrolysis of the adenine ring of phosphoribosyl-AMP. This is Phosphoribosyl-AMP cyclohydrolase from Methanosphaera stadtmanae (strain ATCC 43021 / DSM 3091 / JCM 11832 / MCB-3).